Reading from the N-terminus, the 77-residue chain is Small ribosomal subunit protein bS21 (77 aa).

This sequence belongs to the bacterial ribosomal protein bS21 family.

This is Small ribosomal subunit protein bS21 from Methylococcus capsulatus (strain ATCC 33009 / NCIMB 11132 / Bath).